The primary structure comprises 178 residues: Ribosome maturation factor RimM (178 aa).

In terms of domain architecture, PRC barrel spans 101–178; it reads ADEYYWYQLV…VMRVEWDADF (78 aa).

Belongs to the RimM family. In terms of assembly, binds ribosomal protein uS19.

It is found in the cytoplasm. An accessory protein needed during the final step in the assembly of 30S ribosomal subunit, possibly for assembly of the head region. Essential for efficient processing of 16S rRNA. May be needed both before and after RbfA during the maturation of 16S rRNA. It has affinity for free ribosomal 30S subunits but not for 70S ribosomes. The polypeptide is Ribosome maturation factor RimM (Pseudomonas putida (strain ATCC 700007 / DSM 6899 / JCM 31910 / BCRC 17059 / LMG 24140 / F1)).